Consider the following 157-residue polypeptide: ATP synthase subunit b (157 aa).

Residues 7–27 traverse the membrane as a helical segment; it reads LIAQLVVFFILAWFTMKFVWP.

This sequence belongs to the ATPase B chain family. As to quaternary structure, F-type ATPases have 2 components, F(1) - the catalytic core - and F(0) - the membrane proton channel. F(1) has five subunits: alpha(3), beta(3), gamma(1), delta(1), epsilon(1). F(0) has three main subunits: a(1), b(2) and c(10-14). The alpha and beta chains form an alternating ring which encloses part of the gamma chain. F(1) is attached to F(0) by a central stalk formed by the gamma and epsilon chains, while a peripheral stalk is formed by the delta and b chains.

It is found in the cell inner membrane. In terms of biological role, f(1)F(0) ATP synthase produces ATP from ADP in the presence of a proton or sodium gradient. F-type ATPases consist of two structural domains, F(1) containing the extramembraneous catalytic core and F(0) containing the membrane proton channel, linked together by a central stalk and a peripheral stalk. During catalysis, ATP synthesis in the catalytic domain of F(1) is coupled via a rotary mechanism of the central stalk subunits to proton translocation. Component of the F(0) channel, it forms part of the peripheral stalk, linking F(1) to F(0). This Azoarcus sp. (strain BH72) protein is ATP synthase subunit b.